The sequence spans 347 residues: DnaJ homolog subfamily C member 22 (347 aa).

The TM2 domain occupies 4 to 50 (GLLMTYTLWAVGGPAGLHHLYLGRDSHALLWMLTLGGGGLGWLWEFW). Transmembrane regions (helical) follow at residues 5–25 (LLMT…HLYL), 32–52 (LLWM…FWML), 81–101 (FVAQ…SLSF), 105–125 (FYIV…AAVG), 135–155 (LGAA…ILPI), 186–206 (GLAY…HTAV), and 218–238 (FLSW…VLLL). Residues 277 to 347 (LALQVFGLSE…GSWRWEETSF (71 aa)) enclose the J domain.

The protein resides in the membrane. Its function is as follows. May function as a co-chaperone. In Bos taurus (Bovine), this protein is DnaJ homolog subfamily C member 22 (DNAJC22).